Reading from the N-terminus, the 442-residue chain is tRNA modification GTPase MnmE (442 aa).

Positions 27, 84, and 124 each coordinate (6S)-5-formyl-5,6,7,8-tetrahydrofolate. Residues 221–366 (GLHVVIVGAP…LLDALQAFAE (146 aa)) enclose the TrmE-type G domain. Residues 231-236 (NAGKSS), 250-256 (SKEAGTT), and 275-278 (DTAG) each bind GTP. 2 residues coordinate Mg(2+): serine 235 and threonine 256. Lysine 442 provides a ligand contact to (6S)-5-formyl-5,6,7,8-tetrahydrofolate.

This sequence belongs to the TRAFAC class TrmE-Era-EngA-EngB-Septin-like GTPase superfamily. TrmE GTPase family. In terms of assembly, homodimer. Heterotetramer of two MnmE and two MnmG subunits. K(+) serves as cofactor.

It localises to the cytoplasm. In terms of biological role, exhibits a very high intrinsic GTPase hydrolysis rate. Involved in the addition of a carboxymethylaminomethyl (cmnm) group at the wobble position (U34) of certain tRNAs, forming tRNA-cmnm(5)s(2)U34. The protein is tRNA modification GTPase MnmE of Brucella suis biovar 1 (strain 1330).